We begin with the raw amino-acid sequence, 753 residues long: Ribosome biogenesis protein BOP1 homolog (753 aa).

The tract at residues 1-155 (MTKRSKGANE…RNTVGNVPLK (155 aa)) is disordered. Composition is skewed to basic and acidic residues over residues 7-18 (GANEDKLIETKS) and 30-41 (KPVEAESLKEED). Composition is skewed to acidic residues over residues 64 to 75 (DDFDSDFSDSED) and 83 to 109 (EDGD…DDDG). Positions 110–121 (SEHVGSDNNEEH) are enriched in basic and acidic residues. Residues 122 to 142 (GSDEDSERGEAVEESDSSEDE) are compositionally biased toward acidic residues. WD repeat units lie at residues 421 to 462 (GHTG…KVWQ), 464 to 502 (DEAI…DEEQ), 539 to 581 (RHFK…TQRL), 626 to 665 (TGLR…KPYK), 669 to 708 (NHPK…DLNQ), and 722 to 753 (SSKG…LYCH).

This sequence belongs to the WD repeat BOP1/ERB1 family. As to quaternary structure, interacts with PES. Interacts with WDR12.

Its subcellular location is the nucleus. The protein localises to the nucleolus. It localises to the nucleoplasm. Required for maturation of ribosomal RNAs and formation of the large ribosomal subunit. Plays an essential role in cell growth and survival through its regulation of ribosome biogenesis and mitotic progression. This is Ribosome biogenesis protein BOP1 homolog from Arabidopsis thaliana (Mouse-ear cress).